A 190-amino-acid chain; its full sequence is ATP synthase subunit b (190 aa).

A helical membrane pass occupies residues 24 to 44; the sequence is IVGSLICFVVILFFFWKLVLP.

This sequence belongs to the ATPase B chain family. As to quaternary structure, F-type ATPases have 2 components, F(1) - the catalytic core - and F(0) - the membrane proton channel. F(1) has five subunits: alpha(3), beta(3), gamma(1), delta(1), epsilon(1). F(0) has three main subunits: a(1), b(2) and c(10-14). The alpha and beta chains form an alternating ring which encloses part of the gamma chain. F(1) is attached to F(0) by a central stalk formed by the gamma and epsilon chains, while a peripheral stalk is formed by the delta and b chains.

The protein localises to the cell membrane. In terms of biological role, f(1)F(0) ATP synthase produces ATP from ADP in the presence of a proton or sodium gradient. F-type ATPases consist of two structural domains, F(1) containing the extramembraneous catalytic core and F(0) containing the membrane proton channel, linked together by a central stalk and a peripheral stalk. During catalysis, ATP synthesis in the catalytic domain of F(1) is coupled via a rotary mechanism of the central stalk subunits to proton translocation. Component of the F(0) channel, it forms part of the peripheral stalk, linking F(1) to F(0). The polypeptide is ATP synthase subunit b (Leifsonia xyli subsp. xyli (strain CTCB07)).